We begin with the raw amino-acid sequence, 445 residues long: FAD-dependent monooxygenase sorC (445 aa).

Residues 8 to 28 (PFEVAIVGGGITGLALAVGLL) traverse the membrane as a helical segment. Residue asparagine 31 is glycosylated (N-linked (GlcNAc...) asparagine). The FAD site is built by glutamate 38 and arginine 119. Residue arginine 201 is part of the active site. Residues aspartate 323 and alanine 336 each contribute to the FAD site. N-linked (GlcNAc...) asparagine glycosylation is present at asparagine 358.

Belongs to the paxM FAD-dependent monooxygenase family. The cofactor is FAD.

It localises to the membrane. It functions in the pathway secondary metabolite biosynthesis. In terms of biological role, FAD-dependent monooxygenase; part of the gene cluster that mediates the biosynthesis of sorbicillinoids, a diverse group of yellow secondary metabolites that restrict growth of competing pathogenic fungi but not of bacteria. Sorbicillinoids biosynthesis requires the action of two PKSs. SorA iteratively combines three acetyl units and the growing chain is modified by the ketoacyl reductase subunit, and optional by the enoyl reductase subunit in the second cycle. The polyketide is then handed over to the PKS SorB, which adds three more acetyl units, and two methyl groups. SorB releases an aldehyde, which undergoes spontaneous cyclization resulting in the formation of sorbicillin or 2',3'-dihydrosorbicillin. The monooxygenase sorC oxidizes sorbicillin and 2',3'-dihydrosorbicillin to 2',3'-dihydrosorbicillinol and sorbicillinol, respectively. The oxidoreductase sorD further converts sorbicillinol into oxosorbicillinol. Sorbicillinol is the building block for the other sorbicillinoids such as disorbicillinol, bisvertinolon, and dihydrobisvertinolone. The protein is FAD-dependent monooxygenase sorC of Penicillium rubens (strain ATCC 28089 / DSM 1075 / NRRL 1951 / Wisconsin 54-1255) (Penicillium chrysogenum).